Reading from the N-terminus, the 578-residue chain is Rhoptry protein 4 (578 aa).

The N-terminal stretch at 1–33 is a signal peptide; sequence MGHPTSFGQPSCLVWLAAAFLVLGLCLVQQGAG. A disordered region spans residues 56–82; it reads VDKYSRDSTEGENTVSEGEAEGSRGGS. The Protein kinase domain occupies 259 to 546; it reads LVRGRRIGLF…ALQAIETPEY (288 aa). Residues 559–578 form a disordered region; sequence LYSGDGTLTGGDDDMPPLET. A compositionally biased stretch (acidic residues) spans 569 to 578; that stretch reads GDDDMPPLET.

In terms of processing, phosphorylated on multiple serine and threonine residues in parasitic extracts and infected cells but not in extracellular parasites.

It is found in the secreted. Its subcellular location is the parasitophorous vacuole membrane. Thought to play a role in parasitophorous vacuole membrane function during the infection of host organisms. The polypeptide is Rhoptry protein 4 (Toxoplasma gondii).